The sequence spans 226 residues: ATP synthase F(0) complex subunit a (226 aa).

6 consecutive transmembrane segments (helical) span residues 9–29 (FITPTMMGLPIVILVIVFPAM), 68–88 (WALMLISLILFIGSTNLLGLV), 97–117 (QLSMNLGMAIPLWAGAVITGF), 138–158 (IPMLVVIETISLFIQPMALAI), 164–184 (ITAGHLLMHLIGGAVLALTSI), and 201–223 (ILEFAVALIQAYVFTLLVSLYLH).

Belongs to the ATPase A chain family. In terms of assembly, component of the ATP synthase complex composed at least of ATP5F1A/subunit alpha, ATP5F1B/subunit beta, ATP5MC1/subunit c (homooctomer), MT-ATP6/subunit a, MT-ATP8/subunit 8, ATP5ME/subunit e, ATP5MF/subunit f, ATP5MG/subunit g, ATP5MK/subunit k, ATP5MJ/subunit j, ATP5F1C/subunit gamma, ATP5F1D/subunit delta, ATP5F1E/subunit epsilon, ATP5PF/subunit F6, ATP5PB/subunit b, ATP5PD/subunit d, ATP5PO/subunit OSCP. ATP synthase complex consists of a soluble F(1) head domain (subunits alpha(3) and beta(3)) - the catalytic core - and a membrane F(0) domain - the membrane proton channel (subunits c, a, 8, e, f, g, k and j). These two domains are linked by a central stalk (subunits gamma, delta, and epsilon) rotating inside the F1 region and a stationary peripheral stalk (subunits F6, b, d, and OSCP). Interacts with DNAJC30; interaction is direct.

The protein localises to the mitochondrion inner membrane. The catalysed reaction is H(+)(in) = H(+)(out). Functionally, subunit a, of the mitochondrial membrane ATP synthase complex (F(1)F(0) ATP synthase or Complex V) that produces ATP from ADP in the presence of a proton gradient across the membrane which is generated by electron transport complexes of the respiratory chain. ATP synthase complex consist of a soluble F(1) head domain - the catalytic core - and a membrane F(1) domain - the membrane proton channel. These two domains are linked by a central stalk rotating inside the F(1) region and a stationary peripheral stalk. During catalysis, ATP synthesis in the catalytic domain of F(1) is coupled via a rotary mechanism of the central stalk subunits to proton translocation. With the subunit c (ATP5MC1), forms the proton-conducting channel in the F(0) domain, that contains two crucial half-channels (inlet and outlet) that facilitate proton movement from the mitochondrial intermembrane space (IMS) into the matrix. Protons are taken up via the inlet half-channel and released through the outlet half-channel, following a Grotthuss mechanism. This is ATP synthase F(0) complex subunit a from Dugong dugon (Dugong).